Consider the following 272-residue polypeptide: Enoyl-[acyl-carrier-protein] reductase [NADH] 1 (272 aa).

Residues G17, 23–24 (SI), Q44, 68–69 (DV), and I96 contribute to the NAD(+) site. Active-site proton acceptor residues include Y149 and Y159. Residues K166 and 195 to 199 (IKTLA) contribute to the NAD(+) site.

This sequence belongs to the short-chain dehydrogenases/reductases (SDR) family. FabI subfamily.

It localises to the cell inner membrane. It carries out the reaction a 2,3-saturated acyl-[ACP] + NAD(+) = a (2E)-enoyl-[ACP] + NADH + H(+). It functions in the pathway lipid metabolism; fatty acid biosynthesis. This Rhizobium meliloti (strain 1021) (Ensifer meliloti) protein is Enoyl-[acyl-carrier-protein] reductase [NADH] 1 (fabI1).